Consider the following 474-residue polypeptide: Glutamate--tRNA ligase (474 aa).

The 'HIGH' region signature appears at P10–G20. C107, C109, C134, and D136 together coordinate Zn(2+). The short motif at R244 to R248 is the 'KMSKS' region element. Position 247 (K247) interacts with ATP.

Belongs to the class-I aminoacyl-tRNA synthetase family. Glutamate--tRNA ligase type 1 subfamily. As to quaternary structure, monomer. Zn(2+) serves as cofactor.

The protein localises to the cytoplasm. It catalyses the reaction tRNA(Glu) + L-glutamate + ATP = L-glutamyl-tRNA(Glu) + AMP + diphosphate. Its function is as follows. Catalyzes the attachment of glutamate to tRNA(Glu) in a two-step reaction: glutamate is first activated by ATP to form Glu-AMP and then transferred to the acceptor end of tRNA(Glu). The chain is Glutamate--tRNA ligase from Anaeromyxobacter dehalogenans (strain 2CP-C).